The sequence spans 71 residues: Protein bdm (71 aa).

This is Protein bdm (bdm) from Escherichia coli (strain K12).